The sequence spans 274 residues: GCN5-related N-acetyltransferase 7, chloroplastic (274 aa).

The N-terminal 65 residues, 1–65, are a transit peptide targeting the chloroplast; sequence MAFLCSSLPS…STFVISESVS (65 aa). One can recognise an N-acetyltransferase domain in the interval 75–267; sequence LRVRTFNELN…QRLLLWLALP (193 aa). Acetyl-CoA contacts are provided by residues 189 to 191, 197 to 202, 228 to 230, and Y235; these read VCV, RNGVGY, and NEA. The Proton donor role is filled by Y235.

It belongs to the acetyltransferase family. GNAT subfamily. In terms of assembly, oligomer. Autoacetylated. As to expression, expressed in green tissues.

The protein localises to the plastid. It is found in the chloroplast. It catalyses the reaction an N-terminal L-alpha-aminoacyl-[protein] + acetyl-CoA = N-terminal N(alpha)-acetyl-L-alpha-aminoacyl-[protein] + CoA + H(+). It carries out the reaction L-lysyl-[protein] + acetyl-CoA = N(6)-acetyl-L-lysyl-[protein] + CoA + H(+). The enzyme catalyses N-terminal L-alanyl-[protein] + acetyl-CoA = N-terminal N(alpha)-acetyl-L-alanyl-[protein] + CoA + H(+). The catalysed reaction is N-terminal L-seryl-[protein] + acetyl-CoA = N-terminal N(alpha)-acetyl-L-seryl-[protein] + CoA + H(+). It catalyses the reaction N-terminal L-threonyl-[protein] + acetyl-CoA = N-terminal N(alpha)-acetyl-L-threonyl-[protein] + CoA + H(+). It carries out the reaction N-terminal L-methionyl-[protein] + acetyl-CoA = N-terminal N(alpha)-acetyl-L-methionyl-[protein] + CoA + H(+). The enzyme catalyses N-terminal L-prolyl-[protein] + acetyl-CoA = N-terminal N(alpha)-acetyl-L-prolyl-[protein] + CoA + H(+). The catalysed reaction is N-terminal L-valyl-[protein] + acetyl-CoA = N-terminal N(alpha)-acetyl-L-valyl-[protein] + CoA + H(+). Protein acetyltransferase with dual specificity triggering both N-alpha-acetylation (NTA), with a large spectrum of modified N-termini, including methionine, alanine, serine, threonine and to a lower extent valine and proline as substrates, and epsilon-lysine acetylation (KA). The polypeptide is GCN5-related N-acetyltransferase 7, chloroplastic (Arabidopsis thaliana (Mouse-ear cress)).